Consider the following 546-residue polypeptide: Choline/ethanolamine transporter FLVCR2 (546 aa).

The disordered stretch occupies residues Met1 to His84. Residues Met1 to Ser93 are Cytoplasmic-facing. The segment covering Gln22–Pro49 has biased composition (polar residues). Repeat copies occupy residues Pro31–His36, Pro37–His42, Pro43–His48, Pro49–His54, Pro55–Asp60, Pro61–His66, and Pro67–His72. The tract at residues Pro31–His84 is 9 X 6 AA tandem repeats of P-S-[VS]-S-[VIAG]-[HD]. A compositionally biased stretch (low complexity) spans His54–Ser74. Residues Pro73 to Gln78 form an 8; approximate repeat. Residues Pro79 to His84 form a 9; approximate repeat. A helical membrane pass occupies residues Val94–Gln118. 3 residues coordinate choline: Asn115, Ala116, and Trp119. Residues Trp119–Ser136 are Extracellular-facing. Residues Ala137–Lys164 form a helical membrane-spanning segment. Residues Phe165–Gly166 lie on the Cytoplasmic side of the membrane. Residues Leu167–Leu186 traverse the membrane as a helical segment. Residues Gly187–Leu193 lie on the Extracellular side of the membrane. A helical membrane pass occupies residues Phe194 to Trp222. Leu212 contacts choline. Over Phe223–Glu227 the chain is Cytoplasmic. Residues Val228–Leu253 traverse the membrane as a helical segment. The Extracellular segment spans residues Val254 to Lys258. The chain crosses the membrane as a helical span at residues Asp259–Val288. Residues Phe289–Asn324 are Cytoplasmic-facing. The chain crosses the membrane as a helical span at residues Leu325–His355. Tyr342 is a choline binding site. Topologically, residues Phe356 to Gln359 are extracellular. The helical transmembrane segment at Glu360–Ser388 threads the bilayer. At Lys389–Thr390 the chain is on the cytoplasmic side. The helical transmembrane segment at Tyr391 to Leu413 threads the bilayer. The Extracellular segment spans residues Asn414–Asn416. A helical transmembrane segment spans residues His417–Leu446. At Thr447–Val454 the chain is on the cytoplasmic side. A helical membrane pass occupies residues Ser455–Asn480. Gln464 is a binding site for choline. Residues Tyr481 to Gly482 are Extracellular-facing. Residues Ser483 to Lys505 form a helical membrane-spanning segment. Over Ser506–Leu546 the chain is Cytoplasmic. Residues Gln511–Gln523 are compositionally biased toward basic and acidic residues. Residues Gln511 to Leu546 form a disordered region. Residue Ser535 is modified to Phosphoserine.

Belongs to the major facilitator superfamily. Feline leukemia virus subgroup C receptor (TC 2.A.1.28.1) family. In terms of assembly, interacts with components of electron transfer chain complexes III, IV and V including CYC1, NDUFA4, COX4I1, ATP5PD and ATP5F1C; these interactions occur in the absence of heme and are disrupted upon heme binding. Interacts with ATP2A2; this interaction occurs in the absence of heme and promotes ATP2A2 proteasomal degradation; the complex is dissociated upon heme binding. Interacts with HMOX1; this interaction is potentiated in the presence of heme.

It is found in the cell membrane. Its subcellular location is the mitochondrion membrane. The protein resides in the endoplasmic reticulum membrane. It carries out the reaction choline(out) = choline(in). The enzyme catalyses ethanolamine(in) = ethanolamine(out). The catalysed reaction is heme b(in) = heme b(out). Its function is as follows. Choline uniporter that specifically mediates choline uptake at the blood-brain-barrier. Responsible for the majority of choline uptake across the blood-brain-barrier from the circulation into the brain. Choline, a nutrient critical for brain development, is a precursor of phosphatidylcholine, as well as betaine. Also mediates transport of ethanolamine. Choline and ethanolamine transport is not coupled with proton transport and is exclusively driven by the choline gradient across the plasma membrane. However, the presence of an inwardly directed proton gradient enhances choline uptake. Also acts as a heme b transporter. Required to regulate mitochondrial respiration processes, ATP synthesis and thermogenesis. At low heme levels, interacts with components of electron transfer chain (ETC) complexes and ATP2A2, leading to ubiquitin-mediated degradation of ATP2A2 and inhibition of thermogenesis. Upon heme binding, dissociates from ETC complexes to allow switching from mitochondrial ATP synthesis to thermogenesis. The chain is Choline/ethanolamine transporter FLVCR2 (Flvcr2) from Rattus norvegicus (Rat).